Here is a 122-residue protein sequence, read N- to C-terminus: Sterile alpha motif domain-containing protein 13 (122 aa).

Residues 51–119 (WAVMDVVNYF…KPLQTKHLKN (69 aa)) form the SAM domain.

This is Sterile alpha motif domain-containing protein 13 (SAMD13) from Homo sapiens (Human).